The sequence spans 366 residues: tRNA/tmRNA (uracil-C(5))-methyltransferase (366 aa).

Positions 190, 218, 223, 239, and 299 each coordinate S-adenosyl-L-methionine. Catalysis depends on cysteine 324, which acts as the Nucleophile. The active-site Proton acceptor is the glutamate 358.

The protein belongs to the class I-like SAM-binding methyltransferase superfamily. RNA M5U methyltransferase family. TrmA subfamily.

The catalysed reaction is uridine(54) in tRNA + S-adenosyl-L-methionine = 5-methyluridine(54) in tRNA + S-adenosyl-L-homocysteine + H(+). It carries out the reaction uridine(341) in tmRNA + S-adenosyl-L-methionine = 5-methyluridine(341) in tmRNA + S-adenosyl-L-homocysteine + H(+). Functionally, dual-specificity methyltransferase that catalyzes the formation of 5-methyluridine at position 54 (m5U54) in all tRNAs, and that of position 341 (m5U341) in tmRNA (transfer-mRNA). This chain is tRNA/tmRNA (uracil-C(5))-methyltransferase, found in Enterobacter sp. (strain 638).